The following is a 652-amino-acid chain: DNA ligase (652 aa).

NAD(+) is bound by residues aspartate 29–aspartate 33, serine 78–leucine 79, and glutamate 107. Catalysis depends on lysine 109, which acts as the N6-AMP-lysine intermediate. NAD(+) is bound by residues arginine 130, glutamate 164, lysine 278, and lysine 302. Residues cysteine 395, cysteine 398, cysteine 413, and cysteine 418 each coordinate Zn(2+). Positions aspartate 577–leucine 652 constitute a BRCT domain.

The protein belongs to the NAD-dependent DNA ligase family. LigA subfamily. It depends on Mg(2+) as a cofactor. Requires Mn(2+) as cofactor.

It catalyses the reaction NAD(+) + (deoxyribonucleotide)n-3'-hydroxyl + 5'-phospho-(deoxyribonucleotide)m = (deoxyribonucleotide)n+m + AMP + beta-nicotinamide D-nucleotide.. In terms of biological role, DNA ligase that catalyzes the formation of phosphodiester linkages between 5'-phosphoryl and 3'-hydroxyl groups in double-stranded DNA using NAD as a coenzyme and as the energy source for the reaction. It is essential for DNA replication and repair of damaged DNA. This chain is DNA ligase, found in Streptococcus suis (strain 98HAH33).